Here is a 132-residue protein sequence, read N- to C-terminus: MSWTPFVDSQFVAPSNGLIQKGLIMGRDGTVWGVSDGWAVTAQEAKNLAGQVANPSSVPASGITLGGVKYMGLVADEENFQGFSSSKKQGVSGVVLKSAVIIGLFGEPHKNPNAYSFLKGVADSLVNAGTLQ.

The protein belongs to the profilin family. In terms of assembly, occurs in many kinds of cells as a complex with monomeric actin in a 1:1 ratio.

The protein localises to the cytoplasm. The protein resides in the cytoskeleton. Functionally, binds to actin and affects the structure of the cytoskeleton. At high concentrations, profilin prevents the polymerization of actin, whereas it enhances it at low concentrations. By binding to PIP2, it inhibits the formation of IP3 and DG. The sequence is that of Profilin from Naegleria pringsheimi (Amoeba).